The chain runs to 151 residues: MSSNVIEIYADGACKGNPGPGGWGAWLSFAGHEKELWGGELVTTNNRMELTAVIRALEALKRQCSVRIYTDSVYVQKGITEWVHSWKARNWLTSDRKPVKNVDLWKALDSLVQQHQVEWVWVKGHAGNVGNERADALANKGVDQVLGREVV.

An RNase H type-1 domain is found at 2-143; that stretch reads SSNVIEIYAD…ADALANKGVD (142 aa). Mg(2+)-binding residues include aspartate 11, glutamate 49, aspartate 71, and aspartate 135.

The protein belongs to the RNase H family. In terms of assembly, monomer. The cofactor is Mg(2+).

It is found in the cytoplasm. The catalysed reaction is Endonucleolytic cleavage to 5'-phosphomonoester.. Functionally, endonuclease that specifically degrades the RNA of RNA-DNA hybrids. This is Ribonuclease H from Methylobacillus flagellatus (strain ATCC 51484 / DSM 6875 / VKM B-1610 / KT).